Consider the following 365-residue polypeptide: Peptide chain release factor 2 (365 aa).

An N5-methylglutamine modification is found at Q252.

The protein belongs to the prokaryotic/mitochondrial release factor family. Methylated by PrmC. Methylation increases the termination efficiency of RF2.

The protein resides in the cytoplasm. Functionally, peptide chain release factor 2 directs the termination of translation in response to the peptide chain termination codons UGA and UAA. The protein is Peptide chain release factor 2 of Escherichia coli O9:H4 (strain HS).